We begin with the raw amino-acid sequence, 299 residues long: S-methyl-5'-thioadenosine phosphorylase (299 aa).

Residues Ser14, 56-57, and 89-90 each bind phosphate; these read RH and SA. Met191 serves as a coordination point for substrate. Position 192 (Thr192) interacts with phosphate. 215–217 contacts substrate; that stretch reads DYD.

This sequence belongs to the PNP/MTAP phosphorylase family. MTAP subfamily. Homohexamer. Dimer of a homotrimer.

The enzyme catalyses S-methyl-5'-thioadenosine + phosphate = 5-(methylsulfanyl)-alpha-D-ribose 1-phosphate + adenine. The protein operates within amino-acid biosynthesis; L-methionine biosynthesis via salvage pathway; S-methyl-5-thio-alpha-D-ribose 1-phosphate from S-methyl-5'-thioadenosine (phosphorylase route): step 1/1. In terms of biological role, catalyzes the reversible phosphorylation of S-methyl-5'-thioadenosine (MTA) to adenine and 5-methylthioribose-1-phosphate. Involved in the breakdown of MTA, a major by-product of polyamine biosynthesis. Responsible for the first step in the methionine salvage pathway after MTA has been generated from S-adenosylmethionine. Has broad substrate specificity with 6-aminopurine nucleosides as preferred substrates. The sequence is that of S-methyl-5'-thioadenosine phosphorylase from Gloeobacter violaceus (strain ATCC 29082 / PCC 7421).